The chain runs to 206 residues: High frequency lysogenization protein HflD homolog (206 aa).

Belongs to the HflD family.

The protein localises to the cytoplasm. It is found in the cell inner membrane. The protein is High frequency lysogenization protein HflD homolog of Pseudomonas syringae pv. syringae (strain B728a).